Consider the following 319-residue polypeptide: Cytochrome c biogenesis protein CcsA (319 aa).

The next 7 helical transmembrane spans lie at 17–37 (TISI…LGGL), 44–64 (GMIV…ASSG), 68–88 (LSNL…LHTI), 143–163 (MLLS…ILII), 223–243 (VISL…VWAN), 257–271 (TWAF…IYLH), and 286–306 (VASI…LLGI).

This sequence belongs to the CcmF/CycK/Ccl1/NrfE/CcsA family. May interact with Ccs1.

It localises to the plastid. Its subcellular location is the chloroplast thylakoid membrane. In terms of biological role, required during biogenesis of c-type cytochromes (cytochrome c6 and cytochrome f) at the step of heme attachment. The sequence is that of Cytochrome c biogenesis protein CcsA from Lolium perenne (Perennial ryegrass).